A 336-amino-acid chain; its full sequence is Inositol 2-dehydrogenase (336 aa).

Belongs to the Gfo/Idh/MocA family. Homotetramer.

The catalysed reaction is myo-inositol + NAD(+) = scyllo-inosose + NADH + H(+). Its function is as follows. Involved in the oxidation of myo-inositol (MI) to 2-keto-myo-inositol (2KMI or 2-inosose). This is Inositol 2-dehydrogenase from Salmonella agona (strain SL483).